A 757-amino-acid chain; its full sequence is Elongation factor G, mitochondrial (757 aa).

The 279-residue stretch at 66–344 folds into the tr-type G domain; the sequence is DRMRNIGISA…VLDYLPCPME (279 aa). GTP-binding positions include 75–82, 142–146, and 196–199; these read AHIDSGKT, DTPGH, and NKLD.

This sequence belongs to the TRAFAC class translation factor GTPase superfamily. Classic translation factor GTPase family. EF-G/EF-2 subfamily.

Its subcellular location is the mitochondrion. Its pathway is protein biosynthesis; polypeptide chain elongation. Its function is as follows. Mitochondrial GTPase that catalyzes the GTP-dependent ribosomal translocation step during translation elongation. During this step, the ribosome changes from the pre-translocational (PRE) to the post-translocational (POST) state as the newly formed A-site-bound peptidyl-tRNA and P-site-bound deacylated tRNA move to the P and E sites, respectively. Catalyzes the coordinated movement of the two tRNA molecules, the mRNA and conformational changes in the ribosome. The protein is Elongation factor G, mitochondrial of Oryza sativa subsp. japonica (Rice).